The following is a 264-amino-acid chain: Somatomedin-B and thrombospondin type-1 domain-containing protein (264 aa).

An N-terminal signal peptide occupies residues 1 to 20 (MRTLWMALCVLARLWPGALA). One can recognise an SMB domain in the interval 24–75 (DAGRCCPGRDPACFASGWRQDRVYGTCFCDQACRLTGDCCFDYARACPARPC). 7 disulfide bridges follow: Cys28–Cys36, Cys28–Cys52, Cys36–Cys70, Cys50–Cys52, Cys50–Cys63, Cys56–Cys62, and Cys63–Cys70. A TSP type-1 domain is found at 74-127 (PCIVGEWSPWSGCASQCRPTARVRRRAVQQEPQNGGEPCPALEERAGCLEYATP). An N-linked (GlcNAc...) asparagine glycan is attached at Asn227.

It belongs to the thrombospondin family.

Its subcellular location is the secreted. The protein localises to the extracellular space. The protein resides in the extracellular matrix. The polypeptide is Somatomedin-B and thrombospondin type-1 domain-containing protein (SBSPON) (Bos taurus (Bovine)).